Consider the following 222-residue polypeptide: Probable transcriptional regulator ycf29 (222 aa).

The Response regulatory domain occupies 4 to 120 (KLMLVENDIV…ELLSIINNLI (117 aa)). D53 bears the 4-aspartylphosphate mark. An HTH luxR-type domain is found at 139-204 (QLNHKIRLTP…LLVKYSINNN (66 aa)). A DNA-binding region (H-T-H motif) is located at residues 163 to 182 (NKEISTILNTSVRNVEKYVS).

The protein resides in the plastid. It is found in the chloroplast. This is Probable transcriptional regulator ycf29 (ycf29) from Pyropia yezoensis (Susabi-nori).